A 325-amino-acid polypeptide reads, in one-letter code: Probable cell division protein WhiA (325 aa).

The segment at residues 273–306 (SLEELGRLADPPMTKDAVAGRIRRLLSMADRKAK) is a DNA-binding region (H-T-H motif).

The protein belongs to the WhiA family.

Functionally, involved in cell division and chromosome segregation. The sequence is that of Probable cell division protein WhiA from Mycobacterium bovis (strain BCG / Tokyo 172 / ATCC 35737 / TMC 1019).